The sequence spans 399 residues: Succinate--CoA ligase [ADP-forming] subunit beta (399 aa).

Residues 9–254 form the ATP-grasp domain; sequence KELLAKYGVG…ETEEDPAEIE (246 aa). ATP contacts are provided by residues K46, 53-55, V112, and E117; that span reads GRG. N209 and D223 together coordinate Mg(2+). Residues N274 and 331–333 contribute to the substrate site; that span reads GIM.

It belongs to the succinate/malate CoA ligase beta subunit family. Heterotetramer of two alpha and two beta subunits. It depends on Mg(2+) as a cofactor.

It catalyses the reaction succinate + ATP + CoA = succinyl-CoA + ADP + phosphate. The enzyme catalyses GTP + succinate + CoA = succinyl-CoA + GDP + phosphate. Its pathway is carbohydrate metabolism; tricarboxylic acid cycle; succinate from succinyl-CoA (ligase route): step 1/1. Its function is as follows. Succinyl-CoA synthetase functions in the citric acid cycle (TCA), coupling the hydrolysis of succinyl-CoA to the synthesis of either ATP or GTP and thus represents the only step of substrate-level phosphorylation in the TCA. The beta subunit provides nucleotide specificity of the enzyme and binds the substrate succinate, while the binding sites for coenzyme A and phosphate are found in the alpha subunit. This chain is Succinate--CoA ligase [ADP-forming] subunit beta, found in Novosphingobium aromaticivorans (strain ATCC 700278 / DSM 12444 / CCUG 56034 / CIP 105152 / NBRC 16084 / F199).